Consider the following 456-residue polypeptide: Bifunctional protein GlmU (456 aa).

The segment at 1 to 229 is pyrophosphorylase; the sequence is MTKKALSAVI…VMEVEGANNR (229 aa). UDP-N-acetyl-alpha-D-glucosamine-binding positions include 11–14, K25, Q76, 81–82, 103–105, G140, E154, N169, and N227; these read LAAG, GT, and YGD. Mg(2+) is bound at residue D105. N227 contacts Mg(2+). The segment at 230–250 is linker; the sequence is LQLAALERYLQNKQASKLLLE. The segment at 251 to 456 is N-acetyltransferase; sequence GVMIYDPARF…QGWQRPIKKK (206 aa). UDP-N-acetyl-alpha-D-glucosamine-binding residues include R333 and K351. Catalysis depends on H363, which acts as the Proton acceptor. UDP-N-acetyl-alpha-D-glucosamine is bound by residues Y366 and N377. Acetyl-CoA is bound by residues A380, 386–387, S405, A423, and R440; that span reads NY.

This sequence in the N-terminal section; belongs to the N-acetylglucosamine-1-phosphate uridyltransferase family. In the C-terminal section; belongs to the transferase hexapeptide repeat family. Homotrimer. It depends on Mg(2+) as a cofactor.

It is found in the cytoplasm. It catalyses the reaction alpha-D-glucosamine 1-phosphate + acetyl-CoA = N-acetyl-alpha-D-glucosamine 1-phosphate + CoA + H(+). It carries out the reaction N-acetyl-alpha-D-glucosamine 1-phosphate + UTP + H(+) = UDP-N-acetyl-alpha-D-glucosamine + diphosphate. It participates in nucleotide-sugar biosynthesis; UDP-N-acetyl-alpha-D-glucosamine biosynthesis; N-acetyl-alpha-D-glucosamine 1-phosphate from alpha-D-glucosamine 6-phosphate (route II): step 2/2. It functions in the pathway nucleotide-sugar biosynthesis; UDP-N-acetyl-alpha-D-glucosamine biosynthesis; UDP-N-acetyl-alpha-D-glucosamine from N-acetyl-alpha-D-glucosamine 1-phosphate: step 1/1. Its pathway is bacterial outer membrane biogenesis; LPS lipid A biosynthesis. Functionally, catalyzes the last two sequential reactions in the de novo biosynthetic pathway for UDP-N-acetylglucosamine (UDP-GlcNAc). The C-terminal domain catalyzes the transfer of acetyl group from acetyl coenzyme A to glucosamine-1-phosphate (GlcN-1-P) to produce N-acetylglucosamine-1-phosphate (GlcNAc-1-P), which is converted into UDP-GlcNAc by the transfer of uridine 5-monophosphate (from uridine 5-triphosphate), a reaction catalyzed by the N-terminal domain. This Haemophilus influenzae (strain PittEE) protein is Bifunctional protein GlmU.